The following is a 22-amino-acid chain: Putative lactoylglutathione lyase (22 aa).

The tract at residues 1 to 22 (ITACLDPDGWKEPGPLPGISTK) is disordered. Glu-12 functions as the Proton donor/acceptor in the catalytic mechanism.

This sequence belongs to the glyoxalase I family. Zn(2+) serves as cofactor.

The enzyme catalyses (R)-S-lactoylglutathione = methylglyoxal + glutathione. It participates in secondary metabolite metabolism; methylglyoxal degradation; (R)-lactate from methylglyoxal: step 1/2. In terms of biological role, catalyzes the conversion of hemimercaptal, formed from methylglyoxal and glutathione, to S-lactoylglutathione. The protein is Putative lactoylglutathione lyase of Pinus strobus (Eastern white pine).